Here is a 372-residue protein sequence, read N- to C-terminus: MSIAYNKIAVRVRLGALRRNFETLRRMSPAAMPVIKSDAYGHGLLPVARTLEAAGADAFAAGTVGECAQLRDGGIPGRIVALLGATDAADAECCVARSIVPAVYSADQLEMLAGRAAPGQQVDIALKFDTGMARLGFSEADLPALLDRLHARPMLRPVLVMSHLAVSDDPSRSDFTRQQGEAFGRILAGVRADWPAAQGSLANSAALLAHPELHFDVQRPGIALYGANPLRGTAQEHLGDGLQPAMDVAAPILQVHPLPAGRSISYGRTFTAPRDMTVAIVATGYADAYSRGLSGKGAMTVHGRRVPILGRVCMQMTAVDVTDVPGVAAGDDAYLLGGPGEALTPDELADLWGTISYEVLCLLGMNPRTHRE.

Lys36 acts as the Proton acceptor; specific for D-alanine in catalysis. Lys36 is modified (N6-(pyridoxal phosphate)lysine). Arg134 is a binding site for substrate. Tyr266 acts as the Proton acceptor; specific for L-alanine in catalysis. Met314 is a binding site for substrate.

The protein belongs to the alanine racemase family. Pyridoxal 5'-phosphate is required as a cofactor.

The enzyme catalyses L-alanine = D-alanine. The protein operates within amino-acid biosynthesis; D-alanine biosynthesis; D-alanine from L-alanine: step 1/1. Its function is as follows. Catalyzes the interconversion of L-alanine and D-alanine. May also act on other amino acids. This chain is Alanine racemase (alr), found in Nitratidesulfovibrio vulgaris (strain DSM 19637 / Miyazaki F) (Desulfovibrio vulgaris).